The primary structure comprises 490 residues: Aspartyl/glutamyl-tRNA(Asn/Gln) amidotransferase subunit B (490 aa).

It belongs to the GatB/GatE family. GatB subfamily. As to quaternary structure, heterotrimer of A, B and C subunits.

The catalysed reaction is L-glutamyl-tRNA(Gln) + L-glutamine + ATP + H2O = L-glutaminyl-tRNA(Gln) + L-glutamate + ADP + phosphate + H(+). It carries out the reaction L-aspartyl-tRNA(Asn) + L-glutamine + ATP + H2O = L-asparaginyl-tRNA(Asn) + L-glutamate + ADP + phosphate + 2 H(+). Allows the formation of correctly charged Asn-tRNA(Asn) or Gln-tRNA(Gln) through the transamidation of misacylated Asp-tRNA(Asn) or Glu-tRNA(Gln) in organisms which lack either or both of asparaginyl-tRNA or glutaminyl-tRNA synthetases. The reaction takes place in the presence of glutamine and ATP through an activated phospho-Asp-tRNA(Asn) or phospho-Glu-tRNA(Gln). This chain is Aspartyl/glutamyl-tRNA(Asn/Gln) amidotransferase subunit B, found in Methylorubrum extorquens (strain PA1) (Methylobacterium extorquens).